The primary structure comprises 218 residues: NAD(P)H-hydrate epimerase (218 aa).

Positions 9–215 constitute a YjeF N-terminal domain; sequence MKKIDQYAID…DIGIPQKAIR (207 aa). A (6S)-NADPHX-binding site is contributed by 55-59; it reads NNGAD. K(+)-binding residues include asparagine 56 and aspartate 127. (6S)-NADPHX contacts are provided by residues 131–137 and aspartate 160; that span reads GTGLNRT. A K(+)-binding site is contributed by serine 163.

The protein belongs to the NnrE/AIBP family. The cofactor is K(+).

The catalysed reaction is (6R)-NADHX = (6S)-NADHX. The enzyme catalyses (6R)-NADPHX = (6S)-NADPHX. Its function is as follows. Catalyzes the epimerization of the S- and R-forms of NAD(P)HX, a damaged form of NAD(P)H that is a result of enzymatic or heat-dependent hydration. This is a prerequisite for the S-specific NAD(P)H-hydrate dehydratase to allow the repair of both epimers of NAD(P)HX. This chain is NAD(P)H-hydrate epimerase, found in Anaerococcus prevotii (strain ATCC 9321 / DSM 20548 / JCM 6508 / NCTC 11806 / PC1) (Peptostreptococcus prevotii).